The sequence spans 421 residues: UDP-N-acetylglucosamine 1-carboxyvinyltransferase (421 aa).

22-23 is a binding site for phosphoenolpyruvate; the sequence is KN. Residue R93 coordinates UDP-N-acetyl-alpha-D-glucosamine. Residue C117 is the Proton donor of the active site. 2-(S-cysteinyl)pyruvic acid O-phosphothioketal is present on C117. UDP-N-acetyl-alpha-D-glucosamine is bound by residues 122–126, D308, and L330; that span reads RPVDL.

It belongs to the EPSP synthase family. MurA subfamily.

The protein localises to the cytoplasm. It catalyses the reaction phosphoenolpyruvate + UDP-N-acetyl-alpha-D-glucosamine = UDP-N-acetyl-3-O-(1-carboxyvinyl)-alpha-D-glucosamine + phosphate. It functions in the pathway cell wall biogenesis; peptidoglycan biosynthesis. Functionally, cell wall formation. Adds enolpyruvyl to UDP-N-acetylglucosamine. This is UDP-N-acetylglucosamine 1-carboxyvinyltransferase from Wolinella succinogenes (strain ATCC 29543 / DSM 1740 / CCUG 13145 / JCM 31913 / LMG 7466 / NCTC 11488 / FDC 602W) (Vibrio succinogenes).